We begin with the raw amino-acid sequence, 63 residues long: Alpha-toxin CsE5 (63 aa).

The region spanning 2–61 (KDGYPVDSGNCKYECLKDDYCNDLCLERKADKGYCYWGKVSCYCYGLPDNSPTKTSGKCN) is the LCN-type CS-alpha/beta domain. 4 cysteine pairs are disulfide-bonded: cysteine 12–cysteine 60, cysteine 16–cysteine 36, cysteine 22–cysteine 43, and cysteine 26–cysteine 45.

Belongs to the long (4 C-C) scorpion toxin superfamily. Sodium channel inhibitor family. Alpha subfamily. Expressed by the venom gland.

It localises to the secreted. Functionally, alpha toxins bind voltage-independently at site-3 of sodium channels (Nav) and inhibit the inactivation of the activated channels, thereby blocking neuronal transmission. The chain is Alpha-toxin CsE5 from Centruroides sculpturatus (Arizona bark scorpion).